A 273-amino-acid chain; its full sequence is 4-hydroxy-tetrahydrodipicolinate reductase (273 aa).

NAD(+) is bound by residues 12-17 (GAGGRM) and Glu-38. An NADP(+)-binding site is contributed by Arg-39. Residues 102 to 104 (GTT) and 126 to 129 (AANF) contribute to the NAD(+) site. Catalysis depends on His-159, which acts as the Proton donor/acceptor. Residue His-160 participates in (S)-2,3,4,5-tetrahydrodipicolinate binding. The active-site Proton donor is the Lys-163. 169–170 (GT) serves as a coordination point for (S)-2,3,4,5-tetrahydrodipicolinate.

Belongs to the DapB family. In terms of assembly, homotetramer.

Its subcellular location is the cytoplasm. The catalysed reaction is (S)-2,3,4,5-tetrahydrodipicolinate + NAD(+) + H2O = (2S,4S)-4-hydroxy-2,3,4,5-tetrahydrodipicolinate + NADH + H(+). The enzyme catalyses (S)-2,3,4,5-tetrahydrodipicolinate + NADP(+) + H2O = (2S,4S)-4-hydroxy-2,3,4,5-tetrahydrodipicolinate + NADPH + H(+). It functions in the pathway amino-acid biosynthesis; L-lysine biosynthesis via DAP pathway; (S)-tetrahydrodipicolinate from L-aspartate: step 4/4. In terms of biological role, catalyzes the conversion of 4-hydroxy-tetrahydrodipicolinate (HTPA) to tetrahydrodipicolinate. This chain is 4-hydroxy-tetrahydrodipicolinate reductase, found in Yersinia enterocolitica serotype O:8 / biotype 1B (strain NCTC 13174 / 8081).